Here is a 534-residue protein sequence, read N- to C-terminus: Protein TIC 62, chloroplastic (534 aa).

A chloroplast-targeting transit peptide spans 1–64 (MPMEVFSLTS…SSSSSSSSIR (64 aa)). The interval 50 to 83 (NNRIRSSSSSSSSIRAQASGSTKSSTAEGIPEKT) is disordered. Residues 63-76 (IRAQASGSTKSSTA) are compositionally biased toward polar residues. 91–120 (VFVAGATGKVGSRTVRELIKLGFKVRAGVR) serves as a coordination point for NADP(+). A disordered region spans residues 334–534 (PSQRPYIPSP…ASPSPSFRKS (201 aa)). Positions 350–360 (DTATVSNTGPS) are enriched in polar residues. Repeat 1 spans residues 387–408 (PLSPYTAYDDLKPPSSPSPTKP). The interval 387-532 (PLSPYTAYDD…PPASPSPSFR (146 aa)) is 3 X 22 AA approximate repeats. The segment covering 421-432 (PTPISSDTPSSI) has biased composition (low complexity). Copy 2 of the repeat occupies 450 to 471 (SLSPYAAYPDLKPPSSPSPSVP). Pro residues predominate over residues 460–469 (LKPPSSPSPS). Residues 495-509 (DTPKNEEQHLHEPKS) are compositionally biased toward basic and acidic residues. Residues 511–532 (PLSPYAMYEDLKPPASPSPSFR) form repeat 3.

Part of the Tic complex. Interacts with TIC40, TIC110 and TIC55. Interacts (via C-terminus) with PETH/FNR.

It is found in the plastid. Its subcellular location is the chloroplast inner membrane. It localises to the chloroplast stroma. In terms of biological role, involved in protein precursor import into chloroplasts. Part of the redox regulon consisting of TIC32, TIC 55 and TIC62. Has a NADPH-dependent dehydrogenase activity, but only after preincubation with lipids. In Pisum sativum (Garden pea), this protein is Protein TIC 62, chloroplastic (TIC62).